The primary structure comprises 594 residues: UvrABC system protein C (594 aa).

In terms of domain architecture, GIY-YIG spans 14–91 (DQPGCYLMKD…IKKHDPKYNI (78 aa)). The UVR domain occupies 196–231 (KEVRSELETKMYEASEKLEFERAKELRDQIAHIDAI).

Belongs to the UvrC family. Interacts with UvrB in an incision complex.

The protein resides in the cytoplasm. Functionally, the UvrABC repair system catalyzes the recognition and processing of DNA lesions. UvrC both incises the 5' and 3' sides of the lesion. The N-terminal half is responsible for the 3' incision and the C-terminal half is responsible for the 5' incision. The protein is UvrABC system protein C of Bacillus cereus (strain Q1).